A 397-amino-acid polypeptide reads, in one-letter code: G2/mitotic-specific cyclin-B2 (397 aa).

Disordered stretches follow at residues Met1–Val20 and Lys64–Val97. The residue at position 8 (Thr8) is a Phosphothreonine. Phosphoserine is present on Ser11. Polar residues predominate over residues Lys64 to Pro74. 3 positions are modified to phosphoserine: Ser77, Ser98, and Ser391.

Belongs to the cyclin family. Cyclin AB subfamily. Interacts with the CDK1 protein kinase to form a serine/threonine kinase holoenzyme complex also known as maturation promoting factor (MPF). The cyclin subunit imparts substrate specificity to the complex.

Essential for the control of the cell cycle at the G2/M (mitosis) transition. This Mesocricetus auratus (Golden hamster) protein is G2/mitotic-specific cyclin-B2 (CCNB2).